A 312-amino-acid chain; its full sequence is Acetaldehyde dehydrogenase (312 aa).

12–15 is a binding site for NAD(+); sequence SGNI. The Acyl-thioester intermediate role is filled by C132. NAD(+) is bound by residues 163-171 and N290; that span reads SAGPGTRAN.

This sequence belongs to the acetaldehyde dehydrogenase family. Heterotetramer composed of two DmpG (aldolase) and two DmpF (dehydrogenase) subunits, which allows a direct channeling of acetaldehyde between the two active sites.

It catalyses the reaction acetaldehyde + NAD(+) + CoA = acetyl-CoA + NADH + H(+). Its pathway is aromatic compound metabolism; phenol degradation. With respect to regulation, is not activated by Mn(2+), Mg(2+), Ca(2+), Zn(2+) or Co(2+). Its function is as follows. Catalyzes the conversion of acetaldehyde to acetyl-CoA, using NAD(+) and coenzyme A. Can also act on propanal and butanal to form propanoyl-CoA and butanoyl-CoA, respectively. Is the final enzyme in the meta-cleavage pathway for the degradation of aromatic compounds such as phenols, cresols and catechols. NADP(+) can replace NAD(+) but the rate of reaction is much slower. The chain is Acetaldehyde dehydrogenase (dmpF) from Pseudomonas sp. (strain CF600).